Reading from the N-terminus, the 356-residue chain is Heparan sulfate 2-O-sulfotransferase 1 (356 aa).

Topologically, residues 1-11 are cytoplasmic; that stretch reads MGLLRIMMPPK. The helical; Signal-anchor for type II membrane protein transmembrane segment at 12–28 threads the bilayer; the sequence is LQLLAVVAFAVAMLFLE. Positions 24–51 form a coiled coil; the sequence is MLFLENQIQKLEESRSKLERAIARHEVR. Topologically, residues 29 to 356 are lumenal; that stretch reads NQIQKLEESR…FYEKIYPKSN (328 aa). Residues Lys83, Thr84, Ala85, Ser86, Thr87, and Ser88 each contribute to the adenosine 3',5'-bisphosphate site. Residues Asn108 and Asn127 are each glycosylated (N-linked (GlcNAc...) asparagine). Active-site residues include His140 and His142. Arg164 and Ser172 together coordinate adenosine 3',5'-bisphosphate. Cystine bridges form between Cys201-Cys209 and Cys222-Cys228. Tyr279, Ser285, Thr290, and Lys293 together coordinate adenosine 3',5'-bisphosphate.

It belongs to the sulfotransferase 3 family. In terms of assembly, homotrimer. Interacts with the C5-epimerase GLCE. In terms of processing, N-glycosylated.

It is found in the golgi apparatus membrane. In terms of biological role, catalyzes the transfer of a sulfo group from 3'-phospho-5'-adenylyl sulfate (PAPS) to the 2-OH position of iduronic acid (IdoA) or glucuronic acid (GlcA) within the heparan sulfate (HS) chain and participates in HS biosynthesis. Required for metanephric development of kidney formation, suggesting that 2-O-sulfation within HS is essential for signaling between ureteric bud and metanephric mesenchyme. The chain is Heparan sulfate 2-O-sulfotransferase 1 from Pongo abelii (Sumatran orangutan).